Reading from the N-terminus, the 144-residue chain is Large ribosomal subunit protein uL16 (144 aa).

This sequence belongs to the universal ribosomal protein uL16 family. Part of the 50S ribosomal subunit.

Binds 23S rRNA and is also seen to make contacts with the A and possibly P site tRNAs. In Levilactobacillus brevis (strain ATCC 367 / BCRC 12310 / CIP 105137 / JCM 1170 / LMG 11437 / NCIMB 947 / NCTC 947) (Lactobacillus brevis), this protein is Large ribosomal subunit protein uL16.